The primary structure comprises 354 residues: 3'-5' exonuclease (354 aa).

Residues 1–120 form a disordered region; the sequence is MERYLTKMPI…PSPEKEKPEK (120 aa). Positions 13–50 are enriched in basic and acidic residues; sequence KANEVPKKEAFAKKETPKVARKATKTDTPKELKDKENA. Positions 59 to 70 are enriched in basic residues; sequence TKGRPGRPAAKR. A compositionally biased stretch (basic and acidic residues) spans 71-91; the sequence is KNLDTPDVKDEKIAMEEENPP. Residues Ser104, Ser110, and Ser112 each carry the phosphoserine modification. A 3'-5' exonuclease domain is found at 149–314; that stretch reads WVEKQKDDVV…GQVIYRELER (166 aa). 3 residues coordinate Mg(2+): Asp163, Glu165, and Asp301.

The protein belongs to the WRNexo family.

The protein localises to the nucleus. Has exonuclease activity on both single-stranded and duplex templates bearing overhangs, but not blunt ended duplex DNA, and cleaves in a 3'-5' direction. Essential for the formation of DNA replication focal centers. Has an important role in maintaining genome stability. This chain is 3'-5' exonuclease, found in Drosophila sechellia (Fruit fly).